The primary structure comprises 214 residues: uncharacterized protein (214 aa).

Positions M1–A24 are cleaved as a signal peptide. A TNase-like domain is found at E64 to I197. Residues R91, E99, and R142 contribute to the active site.

This is an uncharacterized protein from Bacillus anthracis.